Here is a 347-residue protein sequence, read N- to C-terminus: Terpene synthase 2 (347 aa).

Positions 103, 247, 251, and 255 each coordinate Mg(2+). The D(D/E)XX(D/E) motif signature appears at 103 to 107 (DDLLE). An NSE motif motif is present at residues 247 to 255 (NDIFSLKKE). The WxxxxxRY motif motif lies at 329 to 336 (WCSKSTRY).

It belongs to the terpene synthase family. Mg(2+) serves as cofactor.

Functionally, terpene synthase that may be involved in the production of volatile terpenoids. Does not show detectable terpene products with either farnesyl diphosphate (FPP) or geranyl diphosphate (GPP). P.polycephalum has a unique biology and these volatile terpenoids could function in internal communication of P.polycephalum, to mark the territory that have been explored, or they may be involved in chemotaxis. The chain is Terpene synthase 2 from Physarum polycephalum (Slime mold).